The following is a 413-amino-acid chain: Multifunctional CCA protein (413 aa).

G8 and R11 together coordinate ATP. CTP is bound by residues G8 and R11. Positions 21 and 23 each coordinate Mg(2+). ATP-binding residues include R91, R137, and R140. R91, R137, and R140 together coordinate CTP. An HD domain is found at T228–W329.

This sequence belongs to the tRNA nucleotidyltransferase/poly(A) polymerase family. Bacterial CCA-adding enzyme type 1 subfamily. As to quaternary structure, monomer. Can also form homodimers and oligomers. Requires Mg(2+) as cofactor. It depends on Ni(2+) as a cofactor.

It carries out the reaction a tRNA precursor + 2 CTP + ATP = a tRNA with a 3' CCA end + 3 diphosphate. It catalyses the reaction a tRNA with a 3' CCA end + 2 CTP + ATP = a tRNA with a 3' CCACCA end + 3 diphosphate. In terms of biological role, catalyzes the addition and repair of the essential 3'-terminal CCA sequence in tRNAs without using a nucleic acid template. Adds these three nucleotides in the order of C, C, and A to the tRNA nucleotide-73, using CTP and ATP as substrates and producing inorganic pyrophosphate. tRNA 3'-terminal CCA addition is required both for tRNA processing and repair. Also involved in tRNA surveillance by mediating tandem CCA addition to generate a CCACCA at the 3' terminus of unstable tRNAs. While stable tRNAs receive only 3'-terminal CCA, unstable tRNAs are marked with CCACCA and rapidly degraded. The protein is Multifunctional CCA protein of Enterobacter sp. (strain 638).